A 269-amino-acid polypeptide reads, in one-letter code: GTP cyclohydrolase FolE2 (269 aa).

The protein belongs to the GTP cyclohydrolase IV family.

It catalyses the reaction GTP + H2O = 7,8-dihydroneopterin 3'-triphosphate + formate + H(+). It participates in cofactor biosynthesis; 7,8-dihydroneopterin triphosphate biosynthesis; 7,8-dihydroneopterin triphosphate from GTP: step 1/1. Converts GTP to 7,8-dihydroneopterin triphosphate. The sequence is that of GTP cyclohydrolase FolE2 from Burkholderia thailandensis (strain ATCC 700388 / DSM 13276 / CCUG 48851 / CIP 106301 / E264).